The sequence spans 245 residues: tRNA (guanine-N(1)-)-methyltransferase (245 aa).

S-adenosyl-L-methionine contacts are provided by residues Gly-111 and 131 to 136; that span reads MGDYVL.

Belongs to the RNA methyltransferase TrmD family. As to quaternary structure, homodimer.

The protein localises to the cytoplasm. It catalyses the reaction guanosine(37) in tRNA + S-adenosyl-L-methionine = N(1)-methylguanosine(37) in tRNA + S-adenosyl-L-homocysteine + H(+). Functionally, specifically methylates guanosine-37 in various tRNAs. This is tRNA (guanine-N(1)-)-methyltransferase from Staphylococcus aureus (strain MRSA252).